A 160-amino-acid polypeptide reads, in one-letter code: Ribonuclease H (160 aa).

The RNase H type-1 domain maps to P5–E146. Mg(2+) contacts are provided by D14, E52, D74, and D138.

The protein belongs to the RNase H family. As to quaternary structure, monomer. Requires Mg(2+) as cofactor.

The protein resides in the cytoplasm. The catalysed reaction is Endonucleolytic cleavage to 5'-phosphomonoester.. Functionally, endonuclease that specifically degrades the RNA of RNA-DNA hybrids. The sequence is that of Ribonuclease H from Acidiphilium cryptum (strain JF-5).